A 306-amino-acid polypeptide reads, in one-letter code: Homoserine kinase (306 aa).

Residue 91–101 (PLARGLGSSAT) coordinates ATP.

It belongs to the GHMP kinase family. Homoserine kinase subfamily.

It is found in the cytoplasm. It carries out the reaction L-homoserine + ATP = O-phospho-L-homoserine + ADP + H(+). It functions in the pathway amino-acid biosynthesis; L-threonine biosynthesis; L-threonine from L-aspartate: step 4/5. Functionally, catalyzes the ATP-dependent phosphorylation of L-homoserine to L-homoserine phosphate. This Synechocystis sp. (strain ATCC 27184 / PCC 6803 / Kazusa) protein is Homoserine kinase.